We begin with the raw amino-acid sequence, 496 residues long: Fibronectin type III and SPRY domain-containing protein 1 (496 aa).

The stretch at 4 to 99 forms a coiled coil; sequence QREALRKIIK…ALESSEELLE (96 aa). The COS domain maps to 105–162; the sequence is LQAMDSEDFPQAAKQIKDGVTMAPAFRLSLKAKVSDNMSHLMVDFAQERQMLQALKFL. Positions 164-268 constitute a Fibronectin type-III domain; the sequence is VPSAPVIDLA…EPVTLETPAF (105 aa). The region spanning 268–477 is the B30.2/SPRY domain; it reads FMFRLDASTS…VTTGLQVPSA (210 aa). Residues 301–336 form a disordered region; sequence KAREKDGKGRTASPINSPARGTPSPKRMPSGRGGRD. 2 positions are modified to omega-N-methylarginine: Arg-310 and Arg-320.

In terms of assembly, oligomerization is required for binding to microtubules. As to expression, highly expressed in brain tissues, including cerebellum, cerebral cortex, medulla, occipital pole, frontal lobe, temporal lobe and putamen. Lower expression in spinal cord.

It localises to the cytoplasm. It is found in the cytoskeleton. Its subcellular location is the microtubule organizing center. The protein localises to the centrosome. The protein resides in the nucleus. It localises to the cleavage furrow. Functionally, may be involved in microtubule organization and stabilization. This Homo sapiens (Human) protein is Fibronectin type III and SPRY domain-containing protein 1 (FSD1).